We begin with the raw amino-acid sequence, 599 residues long: MFPAQDALPRGGLHLKEEPLLPSSLGSVRSWMQSAGILDSNTAAQSGVGLARAHFEKQPPSNLRKSNFFHFVLAMYDRQGQPVEVERTAFIDFVEKDREPGTEKTNNGIHYRLRLVYNNGLRTEQDLYVRLIDSMSKQAIIYEGQDKNPEMCRVLLTHEIMCSRCCDRKSCGNRNETPSDPVIIDRFFLKFFLKCNQNCLKNAGNPRDMRRFQVVVSTTVSVDGHVLAVSDNMFVHNNSKHGRRARRLDPSEAATPCIKAISPGEGWTTGGATVIIIGDNFFDGLQVVFGNVLLWSELITPHAIRVQTPPRHIPGVVEVTLSYKSKQFCKGAPGRFVYTALNEPTIDYGFQRLQKVIPRHPGDPERLPKEVLLKRAADLAEALYGVPSSNQELLLKRAADVAEALYSAPRAPAPLGPLAPSHPHPAVVGINAFSSPLAIAVGDTTPEPGYARSCGSASPRFAPSPGSQQSSYGSGLGAGLGSYGAPGVTGLGVPGSPSFLNGSTATSPFAIMPSSPPLAAASSMSLPAAAPTTSVFSFSPVNMICAVKQRSAFAPVLRPPSSPSQACPRAHREGLPDQPFEDTDKFHSAARGLQGLAYS.

Residues 64 to 67 form an interaction with DNA region; the sequence is RKSN. The C5-type zinc-finger motif lies at 152–171; it reads CRVLLTHEIMCSRCCDRKSC. Interaction with DNA stretches follow at residues 198-205 and 237-240; these read NCLKNAGN and NNSK. The region spanning 256-339 is the IPT/TIG domain; sequence PCIKAISPGE…KGAPGRFVYT (84 aa). 2 disordered regions span residues 449–473 and 556–586; these read GYARSCGSASPRFAPSPGSQQSSYG and VLRPPSSPSQACPRAHREGLPDQPFEDTDKF. Over residues 464–473 the composition is skewed to low complexity; the sequence is SPGSQQSSYG.

This sequence belongs to the COE family. In terms of assembly, forms either a homodimer or a heterodimer with a related family member. In terms of tissue distribution, expressed in the olfactory epithelium, including in both neuronal and basal cell layers. Absent in the vomeronasal organ. Absent from NK cells and CD8(+) T cells.

It localises to the nucleus. In terms of biological role, transcription factor. Positively modulates transcription, perhaps less strongly than other early B cell factor/EBF family proteins. Binds an EBF1/Olf-1 consensus site in vitro. The protein is Transcription factor COE4 (Ebf4) of Mus musculus (Mouse).